The sequence spans 338 residues: Heat-inducible transcription repressor HrcA (338 aa).

The protein belongs to the HrcA family.

In terms of biological role, negative regulator of class I heat shock genes (grpE-dnaK-dnaJ and groELS operons). Prevents heat-shock induction of these operons. The polypeptide is Heat-inducible transcription repressor HrcA (Bacillus anthracis (strain A0248)).